The sequence spans 456 residues: Bifunctional protein GlmU (456 aa).

A pyrophosphorylase region spans residues 1 to 229 (MTKKALSAVI…VMEVEGANNR (229 aa)). UDP-N-acetyl-alpha-D-glucosamine contacts are provided by residues 11–14 (LAAG), Lys-25, Gln-76, 81–82 (GT), 103–105 (YGD), Gly-140, Glu-154, Asn-169, and Asn-227. Residue Asp-105 coordinates Mg(2+). Mg(2+) is bound at residue Asn-227. The segment at 230–250 (LQLAALERYFQNKQASKLLLE) is linker. The interval 251–456 (GVMIYDPARF…QGWQRPIKKK (206 aa)) is N-acetyltransferase. The UDP-N-acetyl-alpha-D-glucosamine site is built by Arg-333 and Lys-351. His-363 acts as the Proton acceptor in catalysis. UDP-N-acetyl-alpha-D-glucosamine-binding residues include Tyr-366 and Asn-377. Residues Ala-380, 386–387 (NY), Ser-405, Ala-423, and Arg-440 contribute to the acetyl-CoA site.

This sequence in the N-terminal section; belongs to the N-acetylglucosamine-1-phosphate uridyltransferase family. The protein in the C-terminal section; belongs to the transferase hexapeptide repeat family. In terms of assembly, homotrimer. Mg(2+) is required as a cofactor.

Its subcellular location is the cytoplasm. The catalysed reaction is alpha-D-glucosamine 1-phosphate + acetyl-CoA = N-acetyl-alpha-D-glucosamine 1-phosphate + CoA + H(+). The enzyme catalyses N-acetyl-alpha-D-glucosamine 1-phosphate + UTP + H(+) = UDP-N-acetyl-alpha-D-glucosamine + diphosphate. It participates in nucleotide-sugar biosynthesis; UDP-N-acetyl-alpha-D-glucosamine biosynthesis; N-acetyl-alpha-D-glucosamine 1-phosphate from alpha-D-glucosamine 6-phosphate (route II): step 2/2. Its pathway is nucleotide-sugar biosynthesis; UDP-N-acetyl-alpha-D-glucosamine biosynthesis; UDP-N-acetyl-alpha-D-glucosamine from N-acetyl-alpha-D-glucosamine 1-phosphate: step 1/1. The protein operates within bacterial outer membrane biogenesis; LPS lipid A biosynthesis. Functionally, catalyzes the last two sequential reactions in the de novo biosynthetic pathway for UDP-N-acetylglucosamine (UDP-GlcNAc). The C-terminal domain catalyzes the transfer of acetyl group from acetyl coenzyme A to glucosamine-1-phosphate (GlcN-1-P) to produce N-acetylglucosamine-1-phosphate (GlcNAc-1-P), which is converted into UDP-GlcNAc by the transfer of uridine 5-monophosphate (from uridine 5-triphosphate), a reaction catalyzed by the N-terminal domain. This chain is Bifunctional protein GlmU, found in Haemophilus influenzae (strain ATCC 51907 / DSM 11121 / KW20 / Rd).